The primary structure comprises 290 residues: Small ribosomal subunit biogenesis GTPase RsgA (290 aa).

One can recognise a CP-type G domain in the interval 62 to 213 (KNSLVRPPIV…IADTPGFSSL (152 aa)). Residues 111 to 114 (SKMD) and 156 to 164 (GQTGVGKST) contribute to the GTP site. Residues Cys-237, Cys-242, His-244, and Cys-250 each coordinate Zn(2+).

Belongs to the TRAFAC class YlqF/YawG GTPase family. RsgA subfamily. Monomer. Associates with 30S ribosomal subunit, binds 16S rRNA. Zn(2+) serves as cofactor.

It localises to the cytoplasm. In terms of biological role, one of several proteins that assist in the late maturation steps of the functional core of the 30S ribosomal subunit. Helps release RbfA from mature subunits. May play a role in the assembly of ribosomal proteins into the subunit. Circularly permuted GTPase that catalyzes slow GTP hydrolysis, GTPase activity is stimulated by the 30S ribosomal subunit. In Streptococcus pyogenes serotype M3 (strain ATCC BAA-595 / MGAS315), this protein is Small ribosomal subunit biogenesis GTPase RsgA.